The primary structure comprises 175 residues: PE-PGRS family protein PE_PGRS8 (175 aa).

One can recognise a PE domain in the interval 1-93 (MSFVIAAPEA…AGSYAAAEAA (93 aa)).

Belongs to the mycobacterial PE family. PGRS subfamily.

It localises to the secreted. Its subcellular location is the cell wall. It is found in the cell surface. The protein is PE-PGRS family protein PE_PGRS8 of Mycobacterium tuberculosis (strain ATCC 25618 / H37Rv).